We begin with the raw amino-acid sequence, 156 residues long: Large ribosomal subunit protein uL22 (156 aa).

It belongs to the universal ribosomal protein uL22 family. Part of the 50S ribosomal subunit.

Functionally, this protein binds specifically to 23S rRNA. It makes multiple contacts with different domains of the 23S rRNA in the assembled 50S subunit and ribosome. In terms of biological role, the globular domain of the protein is located near the polypeptide exit tunnel on the outside of the subunit, while an extended beta-hairpin is found that lines the wall of the exit tunnel in the center of the 70S ribosome. In Aeropyrum pernix (strain ATCC 700893 / DSM 11879 / JCM 9820 / NBRC 100138 / K1), this protein is Large ribosomal subunit protein uL22.